The sequence spans 1057 residues: Carbamoyl phosphate synthase large chain (1057 aa).

The segment at 1 to 401 (MPKRNDIKTI…SLLKAIRSLE (401 aa)) is carboxyphosphate synthetic domain. The ATP site is built by Arg-129, Arg-169, Gly-175, Gly-176, Lys-208, Ile-210, Glu-215, Gly-241, Ile-242, His-243, Gln-284, and Glu-298. The ATP-grasp 1 domain maps to 133-327 (RTLMNDLNVP…IAKLAAKIAV (195 aa)). Mg(2+) is bound by residues Gln-284, Glu-298, and Asn-300. Mn(2+) contacts are provided by Gln-284, Glu-298, and Asn-300. The tract at residues 402–546 (YGVHHLGLPN…YGTYETENES (145 aa)) is oligomerization domain. The carbamoyl phosphate synthetic domain stretch occupies residues 547-929 (IVTDKEKILV…ALFKGLTGSG (383 aa)). Residues 671 to 861 (EALLRKINVP…MAQLAMRAII (191 aa)) enclose the ATP-grasp 2 domain. Positions 707, 746, 748, 752, 777, 778, 779, 780, 820, and 832 each coordinate ATP. Residues Gln-820, Glu-832, and Asn-834 each coordinate Mg(2+). 3 residues coordinate Mn(2+): Gln-820, Glu-832, and Asn-834. The MGS-like domain maps to 930 to 1057 (VEVKDHGTVL…ESMTFTMRQM (128 aa)). An allosteric domain region spans residues 930-1057 (VEVKDHGTVL…ESMTFTMRQM (128 aa)).

The protein belongs to the CarB family. Composed of two chains; the small (or glutamine) chain promotes the hydrolysis of glutamine to ammonia, which is used by the large (or ammonia) chain to synthesize carbamoyl phosphate. Tetramer of heterodimers (alpha,beta)4. Mg(2+) serves as cofactor. Mn(2+) is required as a cofactor.

It carries out the reaction hydrogencarbonate + L-glutamine + 2 ATP + H2O = carbamoyl phosphate + L-glutamate + 2 ADP + phosphate + 2 H(+). The catalysed reaction is hydrogencarbonate + NH4(+) + 2 ATP = carbamoyl phosphate + 2 ADP + phosphate + 2 H(+). It participates in amino-acid biosynthesis; L-arginine biosynthesis; carbamoyl phosphate from bicarbonate: step 1/1. The protein operates within pyrimidine metabolism; UMP biosynthesis via de novo pathway; (S)-dihydroorotate from bicarbonate: step 1/3. Large subunit of the glutamine-dependent carbamoyl phosphate synthetase (CPSase). CPSase catalyzes the formation of carbamoyl phosphate from the ammonia moiety of glutamine, carbonate, and phosphate donated by ATP, constituting the first step of 2 biosynthetic pathways, one leading to arginine and/or urea and the other to pyrimidine nucleotides. The large subunit (synthetase) binds the substrates ammonia (free or transferred from glutamine from the small subunit), hydrogencarbonate and ATP and carries out an ATP-coupled ligase reaction, activating hydrogencarbonate by forming carboxy phosphate which reacts with ammonia to form carbamoyl phosphate. The protein is Carbamoyl phosphate synthase large chain of Staphylococcus aureus (strain MRSA252).